The sequence spans 256 residues: Small ribosomal subunit protein eS1 (256 aa).

Ala-2 is modified (N-acetylalanine; partial).

This sequence belongs to the eukaryotic ribosomal protein eS1 family. As to quaternary structure, component of the small ribosomal subunit. Mature ribosomes consist of a small (40S) and a large (60S) subunit. The 40S subunit contains about 33 different proteins and 1 molecule of RNA (18S). The 60S subunit contains about 49 different proteins and 3 molecules of RNA (25S, 5.8S and 5S).

The protein localises to the cytoplasm. The sequence is that of Small ribosomal subunit protein eS1 from Fusarium vanettenii (strain ATCC MYA-4622 / CBS 123669 / FGSC 9596 / NRRL 45880 / 77-13-4) (Fusarium solani subsp. pisi).